The following is a 403-amino-acid chain: S-adenosylmethionine synthase (403 aa).

Residue His15 participates in ATP binding. Mg(2+) is bound at residue Asp17. Glu43 serves as a coordination point for K(+). L-methionine contacts are provided by Glu56 and Gln99. The tract at residues 99 to 109 is flexible loop; that stretch reads QSPDINQGVDR. Residues 166 to 168, 232 to 233, Asp241, 247 to 248, Ala264, and Lys268 contribute to the ATP site; these read DAK, KF, and RK. Asp241 is a binding site for L-methionine. Residue Lys272 participates in L-methionine binding.

This sequence belongs to the AdoMet synthase family. As to quaternary structure, homotetramer; dimer of dimers. It depends on Mg(2+) as a cofactor. The cofactor is K(+).

It localises to the cytoplasm. It carries out the reaction L-methionine + ATP + H2O = S-adenosyl-L-methionine + phosphate + diphosphate. The protein operates within amino-acid biosynthesis; S-adenosyl-L-methionine biosynthesis; S-adenosyl-L-methionine from L-methionine: step 1/1. In terms of biological role, catalyzes the formation of S-adenosylmethionine (AdoMet) from methionine and ATP. The overall synthetic reaction is composed of two sequential steps, AdoMet formation and the subsequent tripolyphosphate hydrolysis which occurs prior to release of AdoMet from the enzyme. The protein is S-adenosylmethionine synthase of Xanthomonas axonopodis pv. citri (strain 306).